A 197-amino-acid chain; its full sequence is UPF0228 protein MA_3125 (197 aa).

Belongs to the UPF0228 family.

The protein is UPF0228 protein MA_3125 of Methanosarcina acetivorans (strain ATCC 35395 / DSM 2834 / JCM 12185 / C2A).